The chain runs to 298 residues: KH domain-containing protein At1g09660/At1g09670 (298 aa).

The KH domain occupies 152–219 (DVPVDKYPSY…EHLCEPLHVL (68 aa)). The segment at 266–298 (NGTLREESPSPSLSPCLSPSMSPFNSKRAKTEI) is disordered. Residues S273 and S287 each carry the phosphoserine modification. Residues 274–288 (PSPSLSPCLSPSMSP) show a composition bias toward low complexity.

The protein localises to the nucleus. This is KH domain-containing protein At1g09660/At1g09670 from Arabidopsis thaliana (Mouse-ear cress).